We begin with the raw amino-acid sequence, 182 residues long: Late embryogenesis abundant protein 3 (182 aa).

The tract at residues methionine 1–threonine 51 is disordered. A Nuclear localization signal (NLS) motif is present at residues serine 7–proline 11. Residues arginine 10–aspartate 21 are compositionally biased toward basic and acidic residues. SMP domains are found at residues valine 58–glutamine 115 and valine 123–glutamine 181. The disordered stretch occupies residues glutamate 145–leucine 182.

This sequence belongs to the LEA type SMP family.

It localises to the cytoplasm. Its subcellular location is the nucleus. Functionally, LEA proteins are late embryonic proteins abundant in higher plant seed embryos. The function of those proteins is not known. The polypeptide is Late embryogenesis abundant protein 3 (Arabidopsis thaliana (Mouse-ear cress)).